Here is a 780-residue protein sequence, read N- to C-terminus: Cullin-5 (780 aa).

Serine 34 bears the Phosphoserine mark. The residue at position 210 (threonine 210) is a Phosphothreonine. A Cullin neddylation domain is found at 711-772 (RILRTQEAII…HKYIRRDESD (62 aa)). Residue lysine 724 forms a Glycyl lysine isopeptide (Lys-Gly) (interchain with G-Cter in NEDD8) linkage.

This sequence belongs to the cullin family. In terms of assembly, component of multiple cullin-5-RING E3 ubiquitin-protein ligase complexes (ECS complexes, also named CRL5 complexes) formed of CUL5, Elongin BC (ELOB and ELOC), RNF7/RBX2 and a variable SOCS box domain-containing protein as substrate-specific recognition component. CUL5-containing ECS complexes specifically contain RNF7/RBX2, and not RBX1, as catalytic subunit. Component of the ECS(ASB2) complex with the substrate recognition component ASB2. Component of the ECS(ASB6) complex with the substrate recognition component ASB6. Component of the ECS(ASB7) complex with the substrate recognition component ASB7. Component of the ECS(ASB9) complex with the substrate recognition component ASB9. Component of the ECS(ASB11) complex with the substrate recognition component ASB11. Component of the ECS(ASB12) complex with the substrate recognition component ASB12. Component of the ECS(LRRC41) complex with the substrate recognition component LRRC41. Component of the ECS(SOCS1) complex with the substrate recognition component SOCS1. Component of the ECS(SOCS2) complex with the substrate recognition component SOCS2. Component of the ECS(WSB1) complex with the substrate recognition subunit WSB1. Component of the ECS(SOCS3) complex with the substrate recognition component SOCS3. Component of the ECS(SOCS7) complex with the substrate recognition component SOCS7. Component of the ECS(SPSB1) complex with the substrate recognition component SPSB1. Component of the ECS(SPSB3) complex with the substrate recognition component SPSB3. Component of the ECS(SPSB2) complex with the substrate recognition component SPSB2. Component of the ECS(SPSB4) complex with the substrate recognition component SPSB4. Component of the ECS(RAB40) complex with the substrate recognition subunit RAB40A, RAB40B or RAB40C. Component of the ECS(KLHDC1) complex with the substrate recognition component KLHDC1. Component of the ECS(PCMTD1) complex with the substrate recognition subunit PCMTD1. May also form complexes containing RBX1 and ELOA or VHL; additional evidence is however required to confirm this result in vivo. Interacts (when neddylated) with ARIH2; leading to activate the E3 ligase activity of ARIH2. Interacts with ERCC6; the interaction is induced by DNA damaging agents or inhibitors of RNA polymerase II elongation. Interacts with ELOA (via the BC-box). Interacts (unneddylated form) with DCUN1D1, DCUN1D2, DCUN1D3, DCUN1D4 and DCUN1D5; these interactions promote the cullin neddylation. As to quaternary structure, (Microbial infection) Interacts (via the substrate recognition component) with HIV-1 Vif; forming an active cullin-5-RING E3 ubiquitin-protein ligase complex (ECS complex). (Microbial infection) Interacts (via the substrate recognition component) with human adenovirus 5 proteins E1B-55K and E4-orf6. In terms of assembly, (Microbial infection) Interacts with herpes virus 8 protein LANA1; this interaction promotes the degradation of NF-kappa-B component RELA. As to quaternary structure, (Microbial infection) Interacts with molluscum contagiosum virus protein MC132; this interaction promotes the degradation of NF-kappa-B component RELA. Neddylated; which enhances the ubiquitination activity of ECS complexes and prevents binding of the inhibitor CAND1. Deneddylated via its interaction with the COP9 signalosome (CSN).

The protein resides in the nucleus. Its pathway is protein modification; protein ubiquitination. Functionally, core component of multiple cullin-5-RING E3 ubiquitin-protein ligase complexes (ECS complexes, also named CRL5 complexes), which mediate the ubiquitination and subsequent proteasomal degradation of target proteins. Acts a scaffold protein that contributes to catalysis through positioning of the substrate and the ubiquitin-conjugating enzyme. The functional specificity of the E3 ubiquitin-protein ligase complex depends on the variable SOCS box-containing substrate recognition component. Acts as a key regulator of neuron positioning during cortex development: component of various SOCS-containing ECS complexes, such as the ECS(SOCS7) complex, that regulate reelin signaling by mediating ubiquitination and degradation of DAB1. ECS(SOCS1) seems to direct ubiquitination of JAK2. The ECS(SOCS2) complex mediates the ubiquitination and subsequent proteasomal degradation of phosphorylated EPOR and GHR. The ECS(SPSB3) complex catalyzes ubiquitination of nuclear CGAS. ECS(KLHDC1) complex is part of the DesCEND (destruction via C-end degrons) pathway and mediates ubiquitination and degradation of truncated SELENOS selenoprotein produced by failed UGA/Sec decoding, which ends with a glycine. The ECS(ASB9) complex mediates ubiquitination and degradation of CKB. As part of some ECS complex, promotes 'Lys-11'-linked ubiquitination and degradation of BTRC. As part of a multisubunit ECS complex, polyubiquitinates monoubiquitinated POLR2A. As part of the ECS(RAB40C) complex, mediates ANKRD28 ubiquitination and degradation, thereby inhibiting protein phosphatase 6 (PP6) complex activity and focal adhesion assembly during cell migration. As part of the ECS(RAB40A) complex, mediates RHOU 'Lys-48'-linked ubiquitination and degradation, thus inhibiting focal adhesion disassembly during cell migration. As part of the ECS(RAB40B) complex, mediates LIMA1/EPLIN and RAP2 ubiquitination, thereby regulating actin cytoskeleton dynamics and stress fiber formation during cell migration. May form a cell surface vasopressin receptor. (Microbial infection) Following infection by HIV-1 virus, CUL5 associates with HIV-1 Vif proteins and forms a cullin-5-RING E3 ubiquitin-protein ligase complex (ECS complex) that catalyzes ubiquitination and degradation of APOBEC3F and APOBEC3G. The complex can also ubiquitinate APOBEC3H to some extent. Its function is as follows. (Microbial infection) Seems to be involved in proteasomal degradation of p53/TP53 stimulated by adenovirus E1B-55 kDa protein. The polypeptide is Cullin-5 (Homo sapiens (Human)).